Here is a 111-residue protein sequence, read N- to C-terminus: MELSLDELKLCLKPLVFFGELKLEISDYEEGKKIEVLDHDEGSLINLADQTINENYVCTTCNCTLYTNENNEVCFIEHPYGAITAVNKDQVIHLTKLIGAIINTDEEDPVE.

This Bacillus subtilis (strain 168) protein is SPbeta prophage-derived uncharacterized protein YopW (yopW).